The chain runs to 192 residues: Fe/S biogenesis protein NfuA (192 aa).

The [4Fe-4S] cluster site is built by cysteine 149 and cysteine 152.

It belongs to the NfuA family. In terms of assembly, homodimer. [4Fe-4S] cluster serves as cofactor.

In terms of biological role, involved in iron-sulfur cluster biogenesis. Binds a 4Fe-4S cluster, can transfer this cluster to apoproteins, and thereby intervenes in the maturation of Fe/S proteins. Could also act as a scaffold/chaperone for damaged Fe/S proteins. The chain is Fe/S biogenesis protein NfuA from Tolumonas auensis (strain DSM 9187 / NBRC 110442 / TA 4).